The following is a 64-amino-acid chain: Orcokinin peptides (64 aa).

Propeptides lie at residues 1–6 (MNIRPG) and 23–24 (NI).

This sequence belongs to the orcokinin family. In terms of tissue distribution, orcokinin-3 is expressed throughout the central nervous system (at protein level).

The protein resides in the secreted. Its function is as follows. Myotropic peptides. The protein is Orcokinin peptides of Camponotus floridanus (Florida carpenter ant).